The primary structure comprises 227 residues: Transcriptional regulatory protein CpxR homolog (227 aa).

One can recognise a Response regulatory domain in the interval 3-115 (KLLLVDDDIE…ELIARIKAIL (113 aa)). D51 is subject to 4-aspartylphosphate. The ompR/PhoB-type DNA-binding region spans 128 to 227 (VEILSFDGIT…LRGKGYALVT (100 aa)).

In terms of processing, phosphorylated.

The protein localises to the cytoplasm. Member of a two-component regulatory system. The protein is Transcriptional regulatory protein CpxR homolog (cpxR) of Haemophilus influenzae (strain ATCC 51907 / DSM 11121 / KW20 / Rd).